The primary structure comprises 578 residues: MALSWRSWLANEGVKHLCLLVWLSLNVLLFWKTFLLYNQGPEYYYIHQMLGLGLCLSRASASVLNLNCSLILLPMCRTVLAYLRGSQKVPSRRTRRLLDKSKTLHITCGITICIFSGVHVAAHLVNALNFSVNYSEHFLALNAARYQNEDPRKLLFTTVPGLTGVCMVVVLFLMVTASTYAIRVSNYDIFWYTHNLFFVFYMLLLLHVSGGLLKYQTNLDTHPPGCISLNRTPSQNMSIADYVSEHFHGSLPGGFSKLEDHYQKTLVKICLEEPKFQAHFPQTWIWISGPLCLYCAERLYRCIRSNKPVTIISVINHPSDVMELRMIKENFKARPGQYIILHCPSVSALENHPFTLTMCPTETKATFGVHFKVVGDWTERFRDLLLPPSSQDSEILPFIQSRNYPKLYIDGPFGSPFEESLNYEVSLCVAGGIGVTPFASILNTLLDDWKPYKLRRLYFIWVCRDIQSFQWFADLLYVLHNKFWQENRPDFVNIQLYLSQTDGIQKIIGEKYHTLNSRLFIGRPRWKLLFDEIAKCNRGKTVGVFCCGPSSISKTLHNLSNRNNSYGTKFEYNKESFS.

Topologically, residues Met1–His16 are cytoplasmic. The chain crosses the membrane as a helical span at residues Leu17–Tyr37. The Extracellular segment spans residues Asn38 to Ser62. Positions Arg58–Ile303 constitute a Ferric oxidoreductase domain. The helical transmembrane segment at Val63–Leu83 threads the bilayer. The Cytoplasmic segment spans residues Arg84–Leu104. The helical transmembrane segment at His105–Val125 threads the bilayer. Residues Asn126 to Leu154 lie on the Extracellular side of the membrane. Asn133 carries N-linked (GlcNAc...) asparagine glycosylation. Residues Leu155–Val175 form a helical membrane-spanning segment. The Cytoplasmic segment spans residues Thr176–Asp188. Residues Ile189–Ser209 form a helical membrane-spanning segment. Topologically, residues Gly210–Glu424 are extracellular. The segment at Asn218–Glu273 is E-loop; essential for H2O2 generating catalytic activity. Residues His248–Glu575 form a mediates interaction with TLR4 region. Positions Arg304–Glu419 constitute an FAD-binding FR-type domain. The helical transmembrane segment at Val425 to Leu445 threads the bilayer. Over Leu446 to Ser578 the chain is Cytoplasmic.

Interacts with TLR4. Interacts with, relocalizes and stabilizes CYBA/p22phox. Interacts with protein disulfide isomerase. Interacts with PPP1R15A. Interacts with LRRC8A; this interaction prevents the ubiquitin-mediated degradation of LRRC8A. It depends on heme as a cofactor. Post-translationally, N-glycosylation is required for the function. In terms of tissue distribution, expressed in vascular smooth muscle.

It is found in the cytoplasm. The protein resides in the endoplasmic reticulum membrane. The protein localises to the cell membrane. It localises to the cell junction. Its subcellular location is the focal adhesion. It is found in the nucleus. The enzyme catalyses NADPH + 2 O2 = 2 superoxide + NADP(+) + H(+). It catalyses the reaction NADPH + O2 + H(+) = H2O2 + NADP(+). Its activity is regulated as follows. Activated by insulin. Inhibited by diphenylene iodonium. Inhibited by plumbagin. Activated by phorbol 12-myristate 13-acetate (PMA). Its function is as follows. NADPH oxidase that catalyzes predominantly the reduction of oxygen to H2O2. Can also catalyze to a smaller extent, the reduction of oxygen to superoxide. May function as an oxygen sensor regulating the KCNK3/TASK-1 potassium channel and HIF1A activity. May regulate insulin signaling cascade. May play a role in apoptosis, bone resorption and lipolysaccharide-mediated activation of NFKB. May produce superoxide in the nucleus and play a role in regulating gene expression upon cell stimulation. Promotes ferroptosis, reactive oxygen species production and reduced glutathione (GSH) levels by activating NLRP3 inflammasome activation and cytokine release. The sequence is that of NADPH oxidase 4 (Nox4) from Rattus norvegicus (Rat).